A 258-amino-acid polypeptide reads, in one-letter code: Insulin-like growth factor-binding protein 4 (258 aa).

The first 21 residues, 1–21 (MLSLCLMAALLLAAGPGPSLG), serve as a signal peptide directing secretion. The region spanning 23–103 (EAIHCPPCSE…VHGQGVCMEL (81 aa)) is the IGFBP N-terminal domain. 6 disulfide bridges follow: C27-C53, C30-C55, C38-C56, C44-C59, C67-C80, and C74-C100. An N-linked (GlcNAc...) asparagine glycan is attached at N125. Intrachain disulfides connect C131-C138, C174-C204, C215-C226, and C228-C249. Positions 171–249 (QGSCQSELHR…GLEPKGELDC (79 aa)) constitute a Thyroglobulin type-1 domain. Position 255 is a phosphoserine (S255).

In terms of assembly, binds IGF2 more than IGF1.

It is found in the secreted. Functionally, IGF-binding proteins prolong the half-life of the IGFs and have been shown to either inhibit or stimulate the growth promoting effects of the IGFs on cell culture. They alter the interaction of IGFs with their cell surface receptors. This chain is Insulin-like growth factor-binding protein 4 (IGFBP4), found in Bos taurus (Bovine).